We begin with the raw amino-acid sequence, 1168 residues long: Transcription-repair-coupling factor (1168 aa).

Residues 633-794 (DMQKSRPMDR…MLGVRDLSVI (162 aa)) form the Helicase ATP-binding domain. 646-653 (GDVGYGKT) serves as a coordination point for ATP. The DEEQ box motif lies at 747-750 (DEEQ). A Helicase C-terminal domain is found at 808-969 (VLEQNMSFIK…GFKIAMRDLN (162 aa)).

The protein in the N-terminal section; belongs to the UvrB family. This sequence in the C-terminal section; belongs to the helicase family. RecG subfamily.

It is found in the cytoplasm. Its function is as follows. Couples transcription and DNA repair by recognizing RNA polymerase (RNAP) stalled at DNA lesions. Mediates ATP-dependent release of RNAP and its truncated transcript from the DNA, and recruitment of nucleotide excision repair machinery to the damaged site. The polypeptide is Transcription-repair-coupling factor (Staphylococcus aureus (strain MRSA252)).